The following is a 283-amino-acid chain: Probable endonuclease 4 (283 aa).

Zn(2+)-binding residues include histidine 66, histidine 106, glutamate 141, aspartate 174, histidine 177, histidine 211, aspartate 224, histidine 226, and glutamate 256.

The protein belongs to the AP endonuclease 2 family. Requires Zn(2+) as cofactor.

It carries out the reaction Endonucleolytic cleavage to 5'-phosphooligonucleotide end-products.. Endonuclease IV plays a role in DNA repair. It cleaves phosphodiester bonds at apurinic or apyrimidinic (AP) sites, generating a 3'-hydroxyl group and a 5'-terminal sugar phosphate. The protein is Probable endonuclease 4 of Carboxydothermus hydrogenoformans (strain ATCC BAA-161 / DSM 6008 / Z-2901).